The sequence spans 245 residues: 3-deoxy-manno-octulosonate cytidylyltransferase (245 aa).

The protein belongs to the KdsB family.

Its subcellular location is the cytoplasm. It carries out the reaction 3-deoxy-alpha-D-manno-oct-2-ulosonate + CTP = CMP-3-deoxy-beta-D-manno-octulosonate + diphosphate. The protein operates within nucleotide-sugar biosynthesis; CMP-3-deoxy-D-manno-octulosonate biosynthesis; CMP-3-deoxy-D-manno-octulosonate from 3-deoxy-D-manno-octulosonate and CTP: step 1/1. It functions in the pathway bacterial outer membrane biogenesis; lipopolysaccharide biosynthesis. Its function is as follows. Activates KDO (a required 8-carbon sugar) for incorporation into bacterial lipopolysaccharide in Gram-negative bacteria. The sequence is that of 3-deoxy-manno-octulosonate cytidylyltransferase from Rhodopseudomonas palustris (strain TIE-1).